We begin with the raw amino-acid sequence, 362 residues long: Anthranilate phosphoribosyltransferase 2 (362 aa).

Residues glycine 103, 106–107 (GD), threonine 111, 113–116 (NIST), 131–139 (KHGNRSASS), and serine 143 contribute to the 5-phospho-alpha-D-ribose 1-diphosphate site. Position 103 (glycine 103) interacts with anthranilate. A Mg(2+)-binding site is contributed by serine 115. Residue asparagine 134 coordinates anthranilate. Arginine 189 contacts anthranilate. Positions 248 and 249 each coordinate Mg(2+).

This sequence belongs to the anthranilate phosphoribosyltransferase family. In terms of assembly, homodimer. Requires Mg(2+) as cofactor.

The catalysed reaction is N-(5-phospho-beta-D-ribosyl)anthranilate + diphosphate = 5-phospho-alpha-D-ribose 1-diphosphate + anthranilate. It participates in amino-acid biosynthesis; L-tryptophan biosynthesis; L-tryptophan from chorismate: step 2/5. Its function is as follows. Catalyzes the transfer of the phosphoribosyl group of 5-phosphorylribose-1-pyrophosphate (PRPP) to anthranilate to yield N-(5'-phosphoribosyl)-anthranilate (PRA). The sequence is that of Anthranilate phosphoribosyltransferase 2 from Nostoc sp. (strain PCC 7120 / SAG 25.82 / UTEX 2576).